Reading from the N-terminus, the 125-residue chain is Protein ApaG (125 aa).

One can recognise an ApaG domain in the interval 1-125 (MINSPRVCIQ…FRLAVPTLIH (125 aa)).

The sequence is that of Protein ApaG from Salmonella arizonae (strain ATCC BAA-731 / CDC346-86 / RSK2980).